The sequence spans 302 residues: FeMo cofactor biosynthesis protein NifB (302 aa).

Positions histidine 22 to arginine 264 constitute a Radical SAM core domain. 3 residues coordinate [4Fe-4S] cluster: cysteine 36, cysteine 40, and cysteine 43. S-adenosyl-L-methionine contacts are provided by glycine 91, threonine 142, and isoleucine 194. The [4Fe-4S] cluster site is built by cysteine 260 and cysteine 263.

Belongs to the radical SAM superfamily. NifB family. In terms of assembly, monomer. It depends on [4Fe-4S] cluster as a cofactor.

The protein operates within cofactor biosynthesis; Fe-Mo cofactor biosynthesis. Involved in the biosynthesis of the iron-molybdenum cofactor (FeMo-co or M-cluster) found in the dinitrogenase enzyme of the nitrogenase complex in nitrogen-fixing microorganisms. NifB catalyzes the crucial step of radical SAM-dependent carbide insertion that occurs concomitant with the insertion of a 9th sulfur and the rearrangement/coupling of two [4Fe-4S] clusters into a [8Fe-9S-C] cluster, the precursor to the M-cluster. This chain is FeMo cofactor biosynthesis protein NifB, found in Methanocaldococcus infernus (strain DSM 11812 / JCM 15783 / ME).